A 162-amino-acid polypeptide reads, in one-letter code: Nucleotide-binding protein ACIAD3137 (162 aa).

It belongs to the YajQ family.

Nucleotide-binding protein. The protein is Nucleotide-binding protein ACIAD3137 of Acinetobacter baylyi (strain ATCC 33305 / BD413 / ADP1).